We begin with the raw amino-acid sequence, 426 residues long: Spermidine/putrescine import ATP-binding protein PotA (426 aa).

The ABC transporter domain occupies 6 to 238 (IEFKNVSKTY…PINHFVADFI (233 aa)). 40–47 (GASGSGKS) is a binding site for ATP.

This sequence belongs to the ABC transporter superfamily. Spermidine/putrescine importer (TC 3.A.1.11.1) family. As to quaternary structure, the complex is composed of two ATP-binding proteins (PotA), two transmembrane proteins (PotB and PotC) and a solute-binding protein (PotD).

It localises to the cell membrane. It carries out the reaction ATP + H2O + polyamine-[polyamine-binding protein]Side 1 = ADP + phosphate + polyamineSide 2 + [polyamine-binding protein]Side 1.. Part of the ABC transporter complex PotABCD involved in spermidine/putrescine import. Responsible for energy coupling to the transport system. The chain is Spermidine/putrescine import ATP-binding protein PotA from Lactococcus lactis subsp. cremoris (strain SK11).